The chain runs to 268 residues: Satratoxin biosynthesis SC1 cluster protein 4 (268 aa).

Helical transmembrane passes span 34 to 54 (VWLV…VHIF), 78 to 98 (LFAI…GLAI), 113 to 133 (HLAG…IKIV), and 145 to 165 (AVIW…APIY).

Belongs to the SAT4 family.

It is found in the membrane. It participates in mycotoxin biosynthesis. In terms of biological role, part of the satratoxin SC1 cluster involved in the biosynthesis of satratoxins, trichothecene mycotoxins that are associated with human food poisonings. Satratoxins are suggested to be made by products of multiple gene clusters (SC1, SC2 and SC3) that encode 21 proteins in all, including polyketide synthases, acetyltransferases, and other enzymes expected to modify the trichothecene skeleton. SC1 encodes 10 proteins, SAT1 to SAT10. The largest are SAT8, which encodes a putative polyketide synthase (PKS) with a conventional non-reducing architecture, and SAT10, a putative protein containing four ankyrin repeats and thus may be involved in protein scaffolding. The putative short-chain reductase SAT3 may assist the PKS in some capacity. SAT6 contains a secretory lipase domain and acts probably as a trichothecene esterase. SAT5 encodes a putative acetyltransferase, and so, with SAT6, may affect endogenous protection from toxicity. The probable transcription factor SAT9 may regulate the expression of the SC1 cluster. SC2 encodes proteins SAT11 to SAT16, the largest of which encodes the putative reducing PKS SAT13. SAT11 is a cytochrome P450 monooxygenase, while SAT14 and SAT16 are probable acetyltransferases. The SC2 cluster may be regulated by the transcription factor SAT15. SC3 is a small cluster that encodes 5 proteins, SAT17 to SAT21. SAT21 is a putative MFS-type transporter which may have a role in exporting secondary metabolites. The four other proteins putatively encoded in SC3 include the taurine hydroxylase-like protein SAT17, the O-methyltransferase SAT18, the acetyltransferase SAT19, and the Cys6-type zinc finger SAT20, the latter being probably involved in regulation of SC3 expression. This is Satratoxin biosynthesis SC1 cluster protein 4 from Stachybotrys chartarum (strain CBS 109288 / IBT 7711) (Toxic black mold).